A 220-amino-acid chain; its full sequence is Peptidyl-tRNA hydrolase (220 aa).

Tyr14 lines the tRNA pocket. The Proton acceptor role is filled by His19. Positions 66, 68, and 114 each coordinate tRNA. The tract at residues Gln184 to Val220 is disordered.

It belongs to the PTH family. Monomer.

It localises to the cytoplasm. It carries out the reaction an N-acyl-L-alpha-aminoacyl-tRNA + H2O = an N-acyl-L-amino acid + a tRNA + H(+). Its function is as follows. Hydrolyzes ribosome-free peptidyl-tRNAs (with 1 or more amino acids incorporated), which drop off the ribosome during protein synthesis, or as a result of ribosome stalling. Catalyzes the release of premature peptidyl moieties from peptidyl-tRNA molecules trapped in stalled 50S ribosomal subunits, and thus maintains levels of free tRNAs and 50S ribosomes. This Deinococcus deserti (strain DSM 17065 / CIP 109153 / LMG 22923 / VCD115) protein is Peptidyl-tRNA hydrolase.